The primary structure comprises 291 residues: Serine/threonine-protein phosphatase Pgam5, mitochondrial (291 aa).

The helical transmembrane segment at 7 to 23 threads the bilayer; sequence FACGTGAGLAAFYLQRL. The interval 59-78 is disordered; the sequence is KSLVRPQKNEQPQEQNRYNS. The segment covering 67–77 has biased composition (polar residues); that stretch reads NEQPQEQNRYN.

This sequence belongs to the phosphoglycerate mutase family. BPG-dependent PGAM subfamily. In terms of assembly, interacts with Pk92B/ASK1.

The protein localises to the mitochondrion outer membrane. It catalyses the reaction O-phospho-L-seryl-[protein] + H2O = L-seryl-[protein] + phosphate. The enzyme catalyses O-phospho-L-threonyl-[protein] + H2O = L-threonyl-[protein] + phosphate. Its function is as follows. Displays phosphatase activity for serine/threonine residues, and dephosphorylates and activates Pk92B kinase. Has apparently no phosphoglycerate mutase activity. The chain is Serine/threonine-protein phosphatase Pgam5, mitochondrial from Drosophila willistoni (Fruit fly).